Reading from the N-terminus, the 244-residue chain is Mediator of RNA polymerase II transcription subunit 19 (244 aa).

2 disordered regions span residues 1–56 (MENF…PGAD) and 171–244 (PKKK…SSLR). Residues 26–47 (GKPPPPPPPPAGGGPGTAPPPT) are compositionally biased toward pro residues. The segment covering 171-182 (PKKKNKHKHKQS) has biased composition (basic residues). A Phosphoserine modification is found at Ser194. Positions 212-224 (KRKKKEKKKKKNR) are enriched in basic residues. Ser226 bears the Phosphoserine mark. Low complexity predominate over residues 234–244 (SSQASSSSSLR).

Belongs to the Mediator complex subunit 19 family. In terms of assembly, component of the Mediator complex, which is composed of MED1, MED4, MED6, MED7, MED8, MED9, MED10, MED11, MED12, MED13, MED13L, MED14, MED15, MED16, MED17, MED18, MED19, MED20, MED21, MED22, MED23, MED24, MED25, MED26, MED27, MED29, MED30, MED31, CCNC, CDK8 and CDC2L6/CDK11. The MED12, MED13, CCNC and CDK8 subunits form a distinct module termed the CDK8 module. Mediator containing the CDK8 module is less active than Mediator lacking this module in supporting transcriptional activation. Individual preparations of the Mediator complex lacking one or more distinct subunits have been variously termed ARC, CRSP, DRIP, PC2, SMCC and TRAP.

Its subcellular location is the nucleus. Functionally, component of the Mediator complex, a coactivator involved in the regulated transcription of nearly all RNA polymerase II-dependent genes. Mediator functions as a bridge to convey information from gene-specific regulatory proteins to the basal RNA polymerase II transcription machinery. Mediator is recruited to promoters by direct interactions with regulatory proteins and serves as a scaffold for the assembly of a functional preinitiation complex with RNA polymerase II and the general transcription factors. In Homo sapiens (Human), this protein is Mediator of RNA polymerase II transcription subunit 19 (MED19).